Here is a 426-residue protein sequence, read N- to C-terminus: Gamma-glutamylputrescine oxidoreductase (426 aa).

It belongs to the gamma-glutamylputrescine oxidoreductase family.

It catalyses the reaction gamma-L-glutamylputrescine + O2 + H2O = 4-(gamma-L-glutamylamino)butanal + H2O2 + NH4(+). The protein operates within amine and polyamine degradation; putrescine degradation; 4-aminobutanoate from putrescine: step 2/4. Functionally, involved in the breakdown of putrescine via the oxidation of L-glutamylputrescine. In Escherichia coli (strain K12), this protein is Gamma-glutamylputrescine oxidoreductase (puuB).